We begin with the raw amino-acid sequence, 265 residues long: H-2 class II histocompatibility antigen, A-Q beta chain (265 aa).

Positions Met-1–Gly-27 are cleaved as a signal peptide. The tract at residues Gly-28–Leu-122 is beta-1. Over Gly-28 to Met-227 the chain is Extracellular. Cystine bridges form between Cys-42-Cys-106 and Cys-145-Cys-201. Residue Asn-46 is glycosylated (N-linked (GlcNAc...) asparagine). The segment at Glu-123–Arg-217 is beta-2. The Ig-like C1-type domain occupies Pro-125–Thr-213. Residues Ala-218–Met-227 form a connecting peptide region. Residues Leu-228–Ile-247 form a helical membrane-spanning segment. The Cytoplasmic segment spans residues Arg-248–Gln-265.

The protein belongs to the MHC class II family. In terms of processing, ubiquitinated in immature dendritic cells leading to down-regulation of MHC class II.

It localises to the membrane. This chain is H-2 class II histocompatibility antigen, A-Q beta chain (H2-Ab1), found in Mus musculus (Mouse).